The following is a 394-amino-acid chain: 8-amino-7-oxononanoate synthase (394 aa).

Residue arginine 22 participates in substrate binding. 113–114 (GY) is a pyridoxal 5'-phosphate binding site. Histidine 138 contributes to the substrate binding site. Pyridoxal 5'-phosphate contacts are provided by serine 184, histidine 212, and threonine 240. N6-(pyridoxal phosphate)lysine is present on lysine 243. Substrate is bound at residue threonine 359.

Belongs to the class-II pyridoxal-phosphate-dependent aminotransferase family. BioF subfamily. Homodimer. It depends on pyridoxal 5'-phosphate as a cofactor.

It carries out the reaction 6-carboxyhexanoyl-[ACP] + L-alanine + H(+) = (8S)-8-amino-7-oxononanoate + holo-[ACP] + CO2. Its pathway is cofactor biosynthesis; biotin biosynthesis. In terms of biological role, catalyzes the decarboxylative condensation of pimeloyl-[acyl-carrier protein] and L-alanine to produce 8-amino-7-oxononanoate (AON), [acyl-carrier protein], and carbon dioxide. The protein is 8-amino-7-oxononanoate synthase of Janthinobacterium sp. (strain Marseille) (Minibacterium massiliensis).